Reading from the N-terminus, the 372-residue chain is Flap endonuclease 1 (372 aa).

Residues 1-105 are N-domain; that stretch reads MGVKGLNQLI…GELEKRLLRR (105 aa). Asp-34 contributes to the Mg(2+) binding site. DNA contacts are provided by Arg-47 and Arg-71. Positions 87, 159, 161, 180, and 182 each coordinate Mg(2+). The tract at residues 123 to 254 is I-domain; sequence EVLKFEKRLV…ATAFKLIKEH (132 aa). Glu-159 is a binding site for DNA. Gly-232 and Asp-234 together coordinate DNA. Asp-234 provides a ligand contact to Mg(2+). The interval 339–347 is interaction with PCNA; sequence VQGRLDGFF. Residues 353–366 are compositionally biased toward basic and acidic residues; sequence DDKKRKADPKESKA. The segment at 353–372 is disordered; sequence DDKKRKADPKESKASKKKKK.

Belongs to the XPG/RAD2 endonuclease family. FEN1 subfamily. In terms of assembly, interacts with PCNA. Three molecules of RAD27 bind to one PCNA trimer with each molecule binding to one PCNA monomer. PCNA stimulates the nuclease activity without altering cleavage specificity. It depends on Mg(2+) as a cofactor. Post-translationally, phosphorylated. Phosphorylation upon DNA damage induces relocalization to the nuclear plasma.

Its subcellular location is the nucleus. It is found in the nucleolus. The protein resides in the nucleoplasm. It localises to the mitochondrion. Structure-specific nuclease with 5'-flap endonuclease and 5'-3' exonuclease activities involved in DNA replication and repair. During DNA replication, cleaves the 5'-overhanging flap structure that is generated by displacement synthesis when DNA polymerase encounters the 5'-end of a downstream Okazaki fragment. It enters the flap from the 5'-end and then tracks to cleave the flap base, leaving a nick for ligation. Also involved in the long patch base excision repair (LP-BER) pathway, by cleaving within the apurinic/apyrimidinic (AP) site-terminated flap. Acts as a genome stabilization factor that prevents flaps from equilibrating into structures that lead to duplications and deletions. Also possesses 5'-3' exonuclease activity on nicked or gapped double-stranded DNA, and exhibits RNase H activity. Also involved in replication and repair of rDNA and in repairing mitochondrial DNA. The chain is Flap endonuclease 1 from Candida albicans (strain WO-1) (Yeast).